The primary structure comprises 2322 residues: Genome polyprotein (2322 aa).

A Peptidase C28 domain is found at 29–182 (MEFTLYNGEK…NPADVLVFVP (154 aa)). Residues cysteine 51, histidine 148, and aspartate 163 each act as for leader protease activity in the active site. Disordered stretches follow at residues 199 to 219 (RLRG…SGNT) and 238 to 262 (QLGD…HTNN). Glycine 202 carries the N-myristoyl glycine; by host lipid modification. 2 stretches are compositionally biased toward polar residues: residues 204–219 (GQSS…SGNT) and 238–251 (QLGD…SNEG). Residues 252–262 (STDTTSTHTNN) show a composition bias toward low complexity. The Cell attachment site signature appears at 869–871 (RGD). The region spanning 1189–1353 (NVHIANLCKV…DGYKINNKLD (165 aa)) is the SF3 helicase domain. 1217–1224 (GKSGQGKS) contacts ATP. The stretch at 1484–1504 (FEVVALCLTLLANIVIMLRQA) is an intramembrane region. The disordered stretch occupies residues 1512-1574 (DDPLDGDVTL…PRAEGPYAGP (63 aa)). Positions 1539–1553 (FRERSPTEQGTREDA) are enriched in basic and acidic residues. Tyrosine 1571, tyrosine 1594, and tyrosine 1618 each carry O-(5'-phospho-RNA)-tyrosine. A Peptidase C3 domain is found at 1642 to 1838 (APPTDLQKMV…YCSCVSRSML (197 aa)). Histidine 1685 functions as the For protease 3C activity; Proton donor/acceptor in the catalytic mechanism. Active-site for protease 3C activity residues include aspartate 1723 and cysteine 1802. Residues 1868–1876 (MRKTKLAPT) carry the Nuclear localization signal motif. One can recognise a RdRp catalytic domain in the interval 2086 to 2204 (KNVWDVDYSA…ASDYDLDFEA (119 aa)).

This sequence belongs to the picornaviruses polyprotein family. As to quaternary structure, interacts with host ISG15. Interacts (via R-G-D motif) with host ITGAV/ITGB6. Interacts with host MAVS; this interaction inhibits binding of host TRAF3 to MAVS, thereby suppressing interferon-mediated responses. In terms of assembly, forms homooligomers. As to quaternary structure, homohexamer. Interacts with host VIM. Interacts with host BECN1. Interacts with host DCTN3. In terms of assembly, interacts with RNA-dependent RNA polymerase; this interaction allows 3B-1 to binds 2 polymerases and act as a primer. It also allows the recruitment of the RNA-dependent RNA polymerase to host membranes. As to quaternary structure, interacts with RNA-dependent RNA polymerase; this interaction allows 3B-2 to act as a primer. Interacts with RNA-dependent RNA polymerase; this interaction allows 3B-3 to act as a primer. In terms of assembly, interacts with 3B-1; this interaction allows 3B-1 to binds 2 polymerases and act as a primer. It also allows the recruitment of the RNA-dependent RNA polymerase to host membranes. Interacts with 3B-2; this interaction allows 3B-2 to act as a primer. Interacts with 3B-3; this interaction allows 3B-3 to act as a primer. Removes six residues from its own C-terminus, generating sLb(pro). In terms of processing, specific enzymatic cleavages in vivo by the viral proteases yield a variety of precursors and mature proteins. The polyprotein seems to be cotranslationally cleaved at the 2A/2B junction by a ribosomal skip from one codon to the next without formation of a peptide bond. This process would release the L-P1-2A peptide from the translational complex. Post-translationally, during virion maturation, immature virions are rendered infectious following cleavage of VP0 into VP4 and VP2. This maturation seems to be an autocatalytic event triggered by the presence of RNA in the capsid and is followed by a conformational change of the particle. Myristoylation is required during RNA encapsidation and formation of the mature virus particle. In terms of processing, uridylylated by the polymerase and covalently linked to the 5'-end of genomic RNA. These uridylylated forms act as a nucleotide-peptide primer for the polymerase.

Its subcellular location is the host nucleus. It localises to the host cytoplasm. The protein localises to the virion. It is found in the host endoplasmic reticulum membrane. The protein resides in the host cytoplasmic vesicle membrane. The enzyme catalyses Autocatalytically cleaves itself from the polyprotein of the foot-and-mouth disease virus by hydrolysis of a Lys-|-Gly bond, but then cleaves host cell initiation factor eIF-4G at bonds -Gly-|-Arg- and -Lys-|-Arg-.. It carries out the reaction a ribonucleoside 5'-triphosphate + H2O = a ribonucleoside 5'-diphosphate + phosphate + H(+). It catalyses the reaction RNA(n) + a ribonucleoside 5'-triphosphate = RNA(n+1) + diphosphate. The catalysed reaction is Selective cleavage of Gln-|-Gly bond in the poliovirus polyprotein. In other picornavirus reactions Glu may be substituted for Gln, and Ser or Thr for Gly.. Functionally, autocatalytically cleaves itself from the polyprotein at the L/VP0 junction. Also cleaves the host translation initiation factors EIF4G1 and EIF4G3, in order to shut off the capped cellular mRNA transcription. Plays a role in counteracting host innate antiviral response using diverse mechanisms. Possesses a deubiquitinase activity acting on both 'Lys-48' and 'Lys-63'-linked polyubiquitin chains. In turn, inhibits the ubiquitination and subsequent activation of key signaling molecules of type I IFN response such as host RIGI, TBK1, TRAF3 and TRAF6. Inhibits host NF-kappa-B activity by inducing a decrease in RELA mRNA levels. Cleaves a peptide bond in the C-terminus of host ISG15, resulting in the damaging of this modifier that can no longer be attached to target proteins. Also cleaves host G3BP1 and G3BP2 in order to inhibit cytoplasmic stress granules assembly. Its function is as follows. Lies on the inner surface of the capsid shell. After binding to the host receptor, the capsid undergoes conformational changes. Capsid protein VP4 is released, capsid protein VP1 N-terminus is externalized, and together, they shape a pore in the host membrane through which the viral genome is translocated into the host cell cytoplasm. After genome has been released, the channel shrinks. Forms an icosahedral capsid of pseudo T=3 symmetry with capsid proteins VP1 and VP3. The capsid is composed of 60 copies of each capsid protein organized in the form of twelve pentamers and encloses the viral positive strand RNA genome. Upon acidifcation in the endosome, dissociates into pentamers. In terms of biological role, forms an icosahedral capsid of pseudo T=3 symmetry with capsid proteins VP0 and VP3. The capsid is composed of 60 copies of each capsid protein organized in the form of twelve pentamers and encloses the viral positive strand RNA genome. Upon acidifcation in the endosome, dissociates into pentamers. Functionally, forms an icosahedral capsid of pseudo T=3 symmetry with capsid proteins VP2 and VP3. The capsid is composed of 60 copies of each capsid protein organized in the form of twelve pentamers and encloses the viral positive strand RNA genome. Mediates cell entry by attachment to an integrin receptor, usually host ITGAV/ITGB6. In addition, targets host MAVS to suppress type I IFN pathway. Upon acidifcation in the endosome, dissociates into pentamers. Its function is as follows. Mediates self-processing of the polyprotein by a translational effect termed 'ribosome skipping'. Mechanistically, 2A-mediated cleavage occurs between the C-terminal glycine and the proline of the downstream protein 2B. In the case of foot-and-mouth disease virus, the 2A oligopeptide is post-translationally 'trimmed' from the C-terminus of the upstream protein 1D by 3C proteinase. Plays an essential role in the virus replication cycle by acting as a viroporin. Creates a pore in the host endoplasmic reticulum and as a consequence releases Ca2+ in the cytoplasm of infected cell. In turn, high levels of cytoplasmic calcium may trigger membrane trafficking and transport of viral ER-associated proteins to viroplasms, sites of viral genome replication. In terms of biological role, associates with and induces structural rearrangements of intracellular membranes. Triggers host autophagy by interacting with host BECN1 and thereby promotes viral replication. Participates in viral replication and interacts with host DHX9. Displays RNA-binding, nucleotide binding and NTPase activities. May play a role in virion morphogenesis and viral RNA encapsidation by interacting with the capsid protein VP3. Functionally, plays important roles in virus replication, virulence and host range. Cooperates with host DDX56 to inhibit IRF3 nuclear translocation and subsequent type I interferon production. Its function is as follows. Covalently linked to the 5'-end of both the positive-strand and negative-strand genomic RNAs. Acts as a genome-linked replication primer. Cysteine protease that generates mature viral proteins from the precursor polyprotein. In addition to its proteolytic activity, binds to viral RNA and thus influences viral genome replication. RNA and substrate bind cooperatively to the protease. In terms of biological role, RNA-directed RNA polymerase 3D-POL replicates genomic and antigenomic RNA by recognizing replications specific signals. Covalently attaches UMP to a tyrosine of VPg, which is used to prime RNA synthesis. The positive stranded RNA genome is first replicated at virus induced membranous vesicles, creating a dsRNA genomic replication form. This dsRNA is then used as template to synthesize positive stranded RNA genomes. ss(+)RNA genomes are either translated, replicated or encapsidated. The chain is Genome polyprotein from Foot-and-mouth disease virus (isolate Swine/Taiwan/OTai/1997 serotype O) (FMDV).